We begin with the raw amino-acid sequence, 283 residues long: Diaminopimelate epimerase (283 aa).

2 residues coordinate substrate: asparagine 13 and asparagine 67. Catalysis depends on cysteine 76, which acts as the Proton donor. Substrate is bound by residues 77–78, asparagine 166, asparagine 199, and 217–218; these read GN and ER. The active-site Proton acceptor is cysteine 226. Residue 227-228 participates in substrate binding; sequence GT.

This sequence belongs to the diaminopimelate epimerase family. As to quaternary structure, homodimer.

The protein localises to the cytoplasm. The catalysed reaction is (2S,6S)-2,6-diaminopimelate = meso-2,6-diaminopimelate. The protein operates within amino-acid biosynthesis; L-lysine biosynthesis via DAP pathway; DL-2,6-diaminopimelate from LL-2,6-diaminopimelate: step 1/1. Catalyzes the stereoinversion of LL-2,6-diaminopimelate (L,L-DAP) to meso-diaminopimelate (meso-DAP), a precursor of L-lysine and an essential component of the bacterial peptidoglycan. The polypeptide is Diaminopimelate epimerase (Desulforapulum autotrophicum (strain ATCC 43914 / DSM 3382 / VKM B-1955 / HRM2) (Desulfobacterium autotrophicum)).